A 158-amino-acid polypeptide reads, in one-letter code: Non-specific lipid transfer protein GPI-anchored 29 (158 aa).

The N-terminal stretch at Met-1–Gly-24 is a signal peptide. Disulfide bonds link Cys-28/Cys-71, Cys-38/Cys-55, Cys-56/Cys-95, and Cys-69/Cys-105. Residue Asn-84 is glycosylated (N-linked (GlcNAc...) asparagine). Residue Ser-134 is the site of GPI-anchor amidated serine attachment. Residues Lys-135–Ile-158 constitute a propeptide, removed in mature form.

This sequence belongs to the plant LTP family. As to expression, confined to the ovaries of the inflorescence.

Its subcellular location is the secreted. It is found in the cell membrane. In terms of biological role, probable lipid transfer protein. This chain is Non-specific lipid transfer protein GPI-anchored 29, found in Arabidopsis thaliana (Mouse-ear cress).